A 247-amino-acid chain; its full sequence is Carboxy-S-adenosyl-L-methionine synthase (247 aa).

S-adenosyl-L-methionine is bound by residues tyrosine 40, 65 to 67 (GAS), 90 to 91 (DN), 122 to 123 (DI), asparagine 137, and arginine 204.

It belongs to the class I-like SAM-binding methyltransferase superfamily. Cx-SAM synthase family. As to quaternary structure, homodimer.

It catalyses the reaction prephenate + S-adenosyl-L-methionine = carboxy-S-adenosyl-L-methionine + 3-phenylpyruvate + H2O. Its function is as follows. Catalyzes the conversion of S-adenosyl-L-methionine (SAM) to carboxy-S-adenosyl-L-methionine (Cx-SAM). In Pseudomonas putida (strain ATCC 47054 / DSM 6125 / CFBP 8728 / NCIMB 11950 / KT2440), this protein is Carboxy-S-adenosyl-L-methionine synthase.